Here is a 205-residue protein sequence, read N- to C-terminus: Small ribosomal subunit protein uS4 (205 aa).

The interval 21-47 is disordered; that stretch reads GRPKSPFNKRDYGPGQHGQGRKGKPSD. In terms of domain architecture, S4 RNA-binding spans 94–154; it reads RRLDSVVYRA…DKSKQLAIID (61 aa).

It belongs to the universal ribosomal protein uS4 family. As to quaternary structure, part of the 30S ribosomal subunit. Contacts protein S5. The interaction surface between S4 and S5 is involved in control of translational fidelity.

In terms of biological role, one of the primary rRNA binding proteins, it binds directly to 16S rRNA where it nucleates assembly of the body of the 30S subunit. With S5 and S12 plays an important role in translational accuracy. The protein is Small ribosomal subunit protein uS4 of Pelagibacter ubique (strain HTCC1062).